A 190-amino-acid polypeptide reads, in one-letter code: Xanthine phosphoribosyltransferase (190 aa).

Residues Leu-20 and Asn-27 each contribute to the xanthine site. Residue 128–132 coordinates 5-phospho-alpha-D-ribose 1-diphosphate; it reads ANGKA. Lys-156 contributes to the xanthine binding site.

It belongs to the purine/pyrimidine phosphoribosyltransferase family. Xpt subfamily. In terms of assembly, homodimer.

It is found in the cytoplasm. It carries out the reaction XMP + diphosphate = xanthine + 5-phospho-alpha-D-ribose 1-diphosphate. The protein operates within purine metabolism; XMP biosynthesis via salvage pathway; XMP from xanthine: step 1/1. Converts the preformed base xanthine, a product of nucleic acid breakdown, to xanthosine 5'-monophosphate (XMP), so it can be reused for RNA or DNA synthesis. This chain is Xanthine phosphoribosyltransferase, found in Pseudomonas entomophila (strain L48).